The following is a 115-amino-acid chain: uncharacterized protein (115 aa).

Positions 1 to 74 are disordered; it reads MGTGLRSQSL…VPGSLGDTEQ (74 aa).

This is an uncharacterized protein from Homo sapiens (Human).